The sequence spans 264 residues: GTP cyclohydrolase FolE2 (264 aa).

This sequence belongs to the GTP cyclohydrolase IV family.

It catalyses the reaction GTP + H2O = 7,8-dihydroneopterin 3'-triphosphate + formate + H(+). It participates in cofactor biosynthesis; 7,8-dihydroneopterin triphosphate biosynthesis; 7,8-dihydroneopterin triphosphate from GTP: step 1/1. Its function is as follows. Converts GTP to 7,8-dihydroneopterin triphosphate. The sequence is that of GTP cyclohydrolase FolE2 from Ruthia magnifica subsp. Calyptogena magnifica.